The following is a 295-amino-acid chain: Nucleotide-binding protein PEPE_0450 (295 aa).

Residue 12–19 (GMSGAGKT) coordinates ATP. 62–65 (DLRS) contacts GTP.

This sequence belongs to the RapZ-like family.

Functionally, displays ATPase and GTPase activities. The protein is Nucleotide-binding protein PEPE_0450 of Pediococcus pentosaceus (strain ATCC 25745 / CCUG 21536 / LMG 10740 / 183-1w).